A 486-amino-acid chain; its full sequence is Ribulose bisphosphate carboxylase large chain (486 aa).

The substrate site is built by N125 and T175. K177 serves as the catalytic Proton acceptor. K179 contributes to the substrate binding site. Mg(2+)-binding residues include K203, D205, and E206. N6-carboxylysine is present on K203. The Proton acceptor role is filled by H295. Substrate-binding residues include R296, H328, and S380.

The protein belongs to the RuBisCO large chain family. Type I subfamily. In terms of assembly, heterohexadecamer of 8 large chains and 8 small chains. Mg(2+) is required as a cofactor.

It carries out the reaction 2 (2R)-3-phosphoglycerate + 2 H(+) = D-ribulose 1,5-bisphosphate + CO2 + H2O. The catalysed reaction is D-ribulose 1,5-bisphosphate + O2 = 2-phosphoglycolate + (2R)-3-phosphoglycerate + 2 H(+). Functionally, ruBisCO catalyzes two reactions: the carboxylation of D-ribulose 1,5-bisphosphate, the primary event in carbon dioxide fixation, as well as the oxidative fragmentation of the pentose substrate. Both reactions occur simultaneously and in competition at the same active site. This is Ribulose bisphosphate carboxylase large chain from Cereibacter sphaeroides (Rhodobacter sphaeroides).